A 333-amino-acid chain; its full sequence is Nucleoid-associated protein PSPTO_1265 (333 aa).

This sequence belongs to the YejK family.

It localises to the cytoplasm. It is found in the nucleoid. This Pseudomonas syringae pv. tomato (strain ATCC BAA-871 / DC3000) protein is Nucleoid-associated protein PSPTO_1265.